The sequence spans 608 residues: Glutamine--fructose-6-phosphate aminotransferase [isomerizing] (608 aa).

Cys2 functions as the Nucleophile; for GATase activity in the catalytic mechanism. The Glutamine amidotransferase type-2 domain maps to 2 to 217 (CGIVGYIGKK…DNEFVLMTKD (216 aa)). 2 consecutive SIS domains span residues 284 to 424 (ISKE…EKGT) and 453 to 598 (IMKK…VDKP). Lys603 serves as the catalytic For Fru-6P isomerization activity.

Homodimer.

It is found in the cytoplasm. It catalyses the reaction D-fructose 6-phosphate + L-glutamine = D-glucosamine 6-phosphate + L-glutamate. Its function is as follows. Catalyzes the first step in hexosamine metabolism, converting fructose-6P into glucosamine-6P using glutamine as a nitrogen source. The sequence is that of Glutamine--fructose-6-phosphate aminotransferase [isomerizing] from Clostridium tetani (strain Massachusetts / E88).